The sequence spans 616 residues: Proline--tRNA ligase (616 aa).

This sequence belongs to the class-II aminoacyl-tRNA synthetase family. ProS type 1 subfamily. In terms of assembly, homodimer.

Its subcellular location is the cytoplasm. It carries out the reaction tRNA(Pro) + L-proline + ATP = L-prolyl-tRNA(Pro) + AMP + diphosphate. In terms of biological role, catalyzes the attachment of proline to tRNA(Pro) in a two-step reaction: proline is first activated by ATP to form Pro-AMP and then transferred to the acceptor end of tRNA(Pro). As ProRS can inadvertently accommodate and process non-cognate amino acids such as alanine and cysteine, to avoid such errors it has two additional distinct editing activities against alanine. One activity is designated as 'pretransfer' editing and involves the tRNA(Pro)-independent hydrolysis of activated Ala-AMP. The other activity is designated 'posttransfer' editing and involves deacylation of mischarged Ala-tRNA(Pro). The misacylated Cys-tRNA(Pro) is not edited by ProRS. This chain is Proline--tRNA ligase, found in Lactococcus lactis subsp. cremoris (strain SK11).